A 427-amino-acid chain; its full sequence is Probable transcription factor At5g28040 (427 aa).

Positions 1-81 (MASDQRDTDF…APATKSSSGT (81 aa)) are disordered. The residue at position 14 (Ser-14) is a Phosphoserine. Over residues 22 to 32 (GGGGGGRGGGE) the composition is skewed to gly residues. The span at 33–62 (TESDEDVVIPEPNEAEDDDHDPDPDPEYED) shows a compositional bias: acidic residues.

The protein belongs to the GeBP family.

The chain is Probable transcription factor At5g28040 from Arabidopsis thaliana (Mouse-ear cress).